A 374-amino-acid polypeptide reads, in one-letter code: Probable aminopeptidase YDR415C (374 aa).

The signal sequence occupies residues 1 to 18 (MRIQSLFVLFNVAIIAWS). Zn(2+)-binding residues include His-177, Asp-196, Glu-235, Asp-262, and His-340.

It belongs to the peptidase M28 family. M28E subfamily. It depends on Zn(2+) as a cofactor.

The polypeptide is Probable aminopeptidase YDR415C (Saccharomyces cerevisiae (strain ATCC 204508 / S288c) (Baker's yeast)).